A 397-amino-acid polypeptide reads, in one-letter code: 2-isopropylmalate synthase 1 (397 aa).

Positions 6 to 268 (VIVFDTTLRD…VHGINTKEIY (263 aa)) constitute a Pyruvate carboxyltransferase domain. D15, H203, H205, and N239 together coordinate Mn(2+).

It belongs to the alpha-IPM synthase/homocitrate synthase family. LeuA type 1 subfamily. Homodimer. It depends on Mn(2+) as a cofactor.

It localises to the cytoplasm. It carries out the reaction 3-methyl-2-oxobutanoate + acetyl-CoA + H2O = (2S)-2-isopropylmalate + CoA + H(+). It functions in the pathway amino-acid biosynthesis; L-leucine biosynthesis; L-leucine from 3-methyl-2-oxobutanoate: step 1/4. Its function is as follows. Catalyzes the condensation of the acetyl group of acetyl-CoA with 3-methyl-2-oxobutanoate (2-ketoisovalerate) to form 3-carboxy-3-hydroxy-4-methylpentanoate (2-isopropylmalate). The chain is 2-isopropylmalate synthase 1 from Caldanaerobacter subterraneus subsp. tengcongensis (strain DSM 15242 / JCM 11007 / NBRC 100824 / MB4) (Thermoanaerobacter tengcongensis).